The primary structure comprises 399 residues: Glucosamine kinase (399 aa).

Residues lysine 98, 149-151 (EYL), and aspartate 156 contribute to the ATP site. A D-glucosamine-binding site is contributed by aspartate 262. Mg(2+) is bound by residues glutamine 267, aspartate 279, and aspartate 281. The Substrate specificity determinant motif motif lies at 366–381 (QVLREIIYAARHLPRW). Glutamate 370 lines the D-glucosamine pocket.

It belongs to the actinobacterial glucosamine kinase family. As to quaternary structure, monomer. The cofactor is Mg(2+).

The enzyme catalyses D-glucosamine + ATP = D-glucosamine 6-phosphate + ADP + H(+). Its function is as follows. Catalyzes the ATP-dependent phosphorylation of D-glucosamine (GlcN) to D-glucosamine 6-phosphate. May be involved in the phosphorylation of acquired extracellular GlcN derived from the hydrolysis of chitosan, i.e., in the incorporation of exogenous GlcN into the bacterial GlcNAc metabolism. Is unable to phosphorylate maltose. This chain is Glucosamine kinase, found in Mycolicibacterium smegmatis (strain ATCC 700084 / mc(2)155) (Mycobacterium smegmatis).